A 217-amino-acid chain; its full sequence is Pyrophosphatase PpaX (217 aa).

Residue aspartate 11 is the Nucleophile of the active site.

Belongs to the HAD-like hydrolase superfamily. PpaX family. The cofactor is Mg(2+).

The enzyme catalyses diphosphate + H2O = 2 phosphate + H(+). Hydrolyzes pyrophosphate formed during P-Ser-HPr dephosphorylation by HPrK/P. Might play a role in controlling the intracellular pyrophosphate pool. This chain is Pyrophosphatase PpaX, found in Listeria welshimeri serovar 6b (strain ATCC 35897 / DSM 20650 / CCUG 15529 / CIP 8149 / NCTC 11857 / SLCC 5334 / V8).